A 393-amino-acid chain; its full sequence is Pyrimidine monooxygenase RutA (393 aa).

FMN is bound by residues 79–80 (IK), asparagine 145, glutamate 154, 170–171 (RY), and serine 220.

This sequence belongs to the NtaA/SnaA/DszA monooxygenase family. RutA subfamily.

The enzyme catalyses uracil + FMNH2 + NADH + O2 = (Z)-3-ureidoacrylate + FMN + NAD(+) + H2O + H(+). The catalysed reaction is thymine + FMNH2 + NADH + O2 = (Z)-2-methylureidoacrylate + FMN + NAD(+) + H2O + H(+). Its function is as follows. Catalyzes the pyrimidine ring opening between N-3 and C-4 by an unusual flavin hydroperoxide-catalyzed mechanism, adding oxygen atoms in the process to yield ureidoacrylate peracid, that immediately reacts with FMN forming ureidoacrylate and FMN-N(5)-oxide. The FMN-N(5)-oxide reacts spontaneously with NADH to produce FMN. Requires the flavin reductase RutF to regenerate FMN in vivo. The polypeptide is Pyrimidine monooxygenase RutA (Escherichia coli O139:H28 (strain E24377A / ETEC)).